Consider the following 271-residue polypeptide: Glutamate racemase (271 aa).

Residues 10 to 11 and 42 to 43 contribute to the substrate site; these read DS and YG. Residue Cys-73 is the Proton donor/acceptor of the active site. A substrate-binding site is contributed by 74–75; the sequence is NT. Cys-183 functions as the Proton donor/acceptor in the catalytic mechanism. 184–185 provides a ligand contact to substrate; that stretch reads TH.

It belongs to the aspartate/glutamate racemases family.

The catalysed reaction is L-glutamate = D-glutamate. It functions in the pathway cell wall biogenesis; peptidoglycan biosynthesis. Functionally, provides the (R)-glutamate required for cell wall biosynthesis. In Lactococcus lactis subsp. cremoris (strain SK11), this protein is Glutamate racemase.